Here is a 61-residue protein sequence, read N- to C-terminus: Metallothionein-2 (61 aa).

An N-acetylmethionine modification is found at methionine 1. Residues 1 to 29 are beta; the sequence is MDPNCSCAAGDSCTCAGSCKCKECKCTSC. Positions 5, 7, 13, 15, 19, 21, 24, 26, 29, 33, 34, 36, 37, 41, 44, 48, 50, and 57 each coordinate a divalent metal cation. Positions 30–61 are alpha; sequence KKSCCSCCPVGCAKCAQGCICKGASDKCSCCA. Residue serine 58 is modified to Phosphoserine. Residues cysteine 59 and cysteine 60 each contribute to the a divalent metal cation site.

It belongs to the metallothionein superfamily. Type 1 family. In terms of assembly, interacts with EOLA1.

Functionally, metallothioneins have a high content of cysteine residues that bind various heavy metals; these proteins are transcriptionally regulated by both heavy metals and glucocorticoids. This is Metallothionein-2 from Homo sapiens (Human).